We begin with the raw amino-acid sequence, 602 residues long: Auxin response factor 18 (602 aa).

The TF-B3 DNA-binding region spans 128-230 (FVKILTASDT…DLRVGVRRLA (103 aa)). The segment at 359 to 396 (TSPISTPAQQPQSKCKRSRPIEPSVKTPAPPSFLYSLP) is disordered. A compositionally biased stretch (polar residues) spans 360–371 (SPISTPAQQPQS). Residues 489–581 (RSRTKVQMQG…EVKKMTTKLK (93 aa)) enclose the PB1 domain.

The protein belongs to the ARF family. In terms of assembly, homodimers and heterodimers.

Its subcellular location is the nucleus. Auxin response factors (ARFs) are transcriptional factors that bind specifically to the DNA sequence 5'-TGTCTC-3' found in the auxin-responsive promoter elements (AuxREs). Could act as transcriptional activator or repressor. Formation of heterodimers with Aux/IAA proteins may alter their ability to modulate early auxin response genes expression. The sequence is that of Auxin response factor 18 (ARF18) from Arabidopsis thaliana (Mouse-ear cress).